A 268-amino-acid polypeptide reads, in one-letter code: Putative hydro-lyase ABAYE2440 (268 aa).

The protein belongs to the D-glutamate cyclase family.

This is Putative hydro-lyase ABAYE2440 from Acinetobacter baumannii (strain AYE).